Reading from the N-terminus, the 161-residue chain is UPF0225 protein HI_0277 (161 aa).

Belongs to the UPF0225 family.

The sequence is that of UPF0225 protein HI_0277 from Haemophilus influenzae (strain ATCC 51907 / DSM 11121 / KW20 / Rd).